A 219-amino-acid polypeptide reads, in one-letter code: Elongation factor Ts, chloroplastic (219 aa).

This sequence belongs to the EF-Ts family.

Its subcellular location is the plastid. It localises to the chloroplast. In terms of biological role, associates with the EF-Tu.GDP complex and induces the exchange of GDP to GTP. It remains bound to the aminoacyl-tRNA.EF-Tu.GTP complex up to the GTP hydrolysis stage on the ribosome. This Guillardia theta (Cryptophyte) protein is Elongation factor Ts, chloroplastic (tsf).